A 332-amino-acid polypeptide reads, in one-letter code: Transcription initiation factor IIB 2 (332 aa).

The segment covering 1 to 10 has biased composition (polar residues); the sequence is MSDTITTRTY. The segment at 1 to 36 is disordered; sequence MSDTITTRTYSADAKSRDVRPRESERDETQQDETQV. The segment covering 14-29 has biased composition (basic and acidic residues); the sequence is AKSRDVRPRESERDET. The segment at 33 to 63 adopts a TFIIB-type zinc-finger fold; it reads ETQVCPECSGHLVTDEEHGETICEDCGLVVE. Zn(2+) contacts are provided by C37, C40, C55, and C58. The segment at 77-106 is disordered; the sequence is DSAERDSKSRVGAPTTKMMHDKGLSTNIGW. 2 tandem repeats follow at residues 149–232 and 243–324.

Belongs to the TFIIB family.

In terms of biological role, stabilizes TBP binding to an archaeal box-A promoter. Also responsible for recruiting RNA polymerase II to the pre-initiation complex (DNA-TBP-TFIIB). The protein is Transcription initiation factor IIB 2 of Haloferax volcanii (strain ATCC 29605 / DSM 3757 / JCM 8879 / NBRC 14742 / NCIMB 2012 / VKM B-1768 / DS2) (Halobacterium volcanii).